Consider the following 150-residue polypeptide: 1,4-dihydroxy-2-naphthoyl-CoA hydrolase (150 aa).

The active site involves D19.

This sequence belongs to the 4-hydroxybenzoyl-CoA thioesterase family. DHNA-CoA hydrolase subfamily.

The enzyme catalyses 1,4-dihydroxy-2-naphthoyl-CoA + H2O = 1,4-dihydroxy-2-naphthoate + CoA + H(+). It functions in the pathway cofactor biosynthesis; phylloquinone biosynthesis. The protein operates within quinol/quinone metabolism; 1,4-dihydroxy-2-naphthoate biosynthesis; 1,4-dihydroxy-2-naphthoate from chorismate: step 7/7. Functionally, catalyzes the hydrolysis of 1,4-dihydroxy-2-naphthoyl-CoA (DHNA-CoA) to 1,4-dihydroxy-2-naphthoate (DHNA), a reaction involved in phylloquinone (vitamin K1) biosynthesis. The sequence is that of 1,4-dihydroxy-2-naphthoyl-CoA hydrolase from Prochlorococcus marinus (strain MIT 9312).